The chain runs to 279 residues: MILDGKGLAARRLELLKEDIIEGGLSPTLATVIVGDDPASHMYVRMKHRACEQVGISSVNISLPEDTTTRTILERIRQLNEDPDIDGILVQLPLPKSIDTEAVLAAILPEKDVDGFHPLNMGRLVTGLPGPRPCTPNGIMTLLHENKISIAGKRAVVVGRSVDVGRPIALLLLHADATVTMCHSKTENLKEITKQADILVSAAGKAGIITADMVKPGATVVDVGTNQVNGKLCGDVAFDEVEKIAGAITPVPGGVGPMTIASLMENTADIARNRCGHFM.

NADP(+) contacts are provided by residues Gly-159–Ser-161, Ser-184, and Thr-225.

The protein belongs to the tetrahydrofolate dehydrogenase/cyclohydrolase family. In terms of assembly, homodimer.

It carries out the reaction (6R)-5,10-methylene-5,6,7,8-tetrahydrofolate + NADP(+) = (6R)-5,10-methenyltetrahydrofolate + NADPH. The catalysed reaction is (6R)-5,10-methenyltetrahydrofolate + H2O = (6R)-10-formyltetrahydrofolate + H(+). Its pathway is one-carbon metabolism; tetrahydrofolate interconversion. In terms of biological role, catalyzes the oxidation of 5,10-methylenetetrahydrofolate to 5,10-methenyltetrahydrofolate and then the hydrolysis of 5,10-methenyltetrahydrofolate to 10-formyltetrahydrofolate. In Methanospirillum hungatei JF-1 (strain ATCC 27890 / DSM 864 / NBRC 100397 / JF-1), this protein is Bifunctional protein FolD.